Reading from the N-terminus, the 105-residue chain is Large ribosomal subunit protein uL24 (105 aa).

The protein belongs to the universal ribosomal protein uL24 family. Part of the 50S ribosomal subunit.

One of two assembly initiator proteins, it binds directly to the 5'-end of the 23S rRNA, where it nucleates assembly of the 50S subunit. Its function is as follows. One of the proteins that surrounds the polypeptide exit tunnel on the outside of the subunit. This chain is Large ribosomal subunit protein uL24, found in Francisella philomiragia subsp. philomiragia (strain ATCC 25017 / CCUG 19701 / FSC 153 / O#319-036).